Reading from the N-terminus, the 500-residue chain is MTNIAILGTASDVGKSIVATALCRIFSNAGVDVAPYKAQNMSNNSGVTPDGFEMGRAQIVQAQAARVAPHADMNPVLLKPNTDTGAQVVLQGKVCADKSAREYFGDTQRWAEAAFESLDRLMVRHELLVIEGAGSCAEMNLYQRDFVNFKTARRAGAAVILVADIDRGGVFAQVVGTLAVIPPEDRALVKGVIINRFRGDKSLFEGGVKMLESMTGVPVLGVIPYFRGFTIDAEDAVPLSSVVDPKQEPSGDKIGVAAIYFPHISNFTDLAPLERDPSVELHYLHRPKSLDGYKALILPGSKNVRGDLAWLETMGWRDEIEKFRKRGGIIVGLCGGYQMLGASIADPYGVEGAPGASAGLAMLPVETVLEREKALCNSVGKIAGTPFFVSGYEIHMGRTALEPGASPLLEVTERNGVATDDFDGAKSADGQVTGTYFHGFFDRPEVRTWFLRLLDGGYESPRGASVADPFELLAKHFSENLDLEKLFAIAGLSVKGEKES.

A GATase cobBQ-type domain is found at 253 to 446 (KIGVAAIYFP…FHGFFDRPEV (194 aa)). Catalysis depends on cysteine 334, which acts as the Nucleophile. Histidine 438 is a catalytic residue.

The protein belongs to the CobB/CobQ family. CobQ subfamily.

It functions in the pathway cofactor biosynthesis; adenosylcobalamin biosynthesis. In terms of biological role, catalyzes amidations at positions B, D, E, and G on adenosylcobyrinic A,C-diamide. NH(2) groups are provided by glutamine, and one molecule of ATP is hydrogenolyzed for each amidation. The chain is Cobyric acid synthase from Chlorobaculum tepidum (strain ATCC 49652 / DSM 12025 / NBRC 103806 / TLS) (Chlorobium tepidum).